Here is a 119-residue protein sequence, read N- to C-terminus: Small ribosomal subunit protein uS13 (119 aa).

Residues 94–119 form a disordered region; sequence GLPVRGQRTQTNARTRKGPRRGPAGK.

Belongs to the universal ribosomal protein uS13 family. In terms of assembly, part of the 30S ribosomal subunit. Forms a loose heterodimer with protein S19. Forms two bridges to the 50S subunit in the 70S ribosome.

Located at the top of the head of the 30S subunit, it contacts several helices of the 16S rRNA. In the 70S ribosome it contacts the 23S rRNA (bridge B1a) and protein L5 of the 50S subunit (bridge B1b), connecting the 2 subunits; these bridges are implicated in subunit movement. Contacts the tRNAs in the A and P-sites. This chain is Small ribosomal subunit protein uS13, found in Alkalilimnicola ehrlichii (strain ATCC BAA-1101 / DSM 17681 / MLHE-1).